The sequence spans 92 residues: Exodeoxyribonuclease 7 small subunit (92 aa).

Residues 1-22 are disordered; that stretch reads MPKKNAISESTNSTPETAPAMT. The segment covering 7-16 has biased composition (polar residues); it reads ISESTNSTPE.

The protein belongs to the XseB family. Heterooligomer composed of large and small subunits.

Its subcellular location is the cytoplasm. It catalyses the reaction Exonucleolytic cleavage in either 5'- to 3'- or 3'- to 5'-direction to yield nucleoside 5'-phosphates.. In terms of biological role, bidirectionally degrades single-stranded DNA into large acid-insoluble oligonucleotides, which are then degraded further into small acid-soluble oligonucleotides. The protein is Exodeoxyribonuclease 7 small subunit of Photorhabdus laumondii subsp. laumondii (strain DSM 15139 / CIP 105565 / TT01) (Photorhabdus luminescens subsp. laumondii).